The primary structure comprises 217 residues: MLTRKQHDLLLFIHNRLSVSGISPSFEEMKLALDLKSKSGIHRLIKALEERGFIRRLPNRARALEVIRLPEDKTEIQKKISRDYTPPKADNDVIEIPLHGRIAAGLPIEALEGQSHLAVPPSYLGSGAHYALEVAGDSMVDAGIFDGDYIIVRQTDEAHEGEIVVALIDNSDATLKYFHREGRMVRLDPANRAYAPMRYDASRIGIQGRLVGLLRRY.

Residues 26-46 (FEEMKLALDLKSKSGIHRLIK) constitute a DNA-binding region (H-T-H motif). Residues Ser138 and Lys176 each act as for autocatalytic cleavage activity in the active site.

It belongs to the peptidase S24 family. Homodimer.

The catalysed reaction is Hydrolysis of Ala-|-Gly bond in repressor LexA.. Functionally, represses a number of genes involved in the response to DNA damage (SOS response), including recA and lexA. In the presence of single-stranded DNA, RecA interacts with LexA causing an autocatalytic cleavage which disrupts the DNA-binding part of LexA, leading to derepression of the SOS regulon and eventually DNA repair. The polypeptide is LexA repressor (Zymomonas mobilis subsp. mobilis (strain ATCC 31821 / ZM4 / CP4)).